Here is a 269-residue protein sequence, read N- to C-terminus: 5'-nucleotidase SurE (269 aa).

A divalent metal cation is bound by residues aspartate 11, aspartate 12, serine 43, and asparagine 101.

It belongs to the SurE nucleotidase family. It depends on a divalent metal cation as a cofactor.

It is found in the cytoplasm. It catalyses the reaction a ribonucleoside 5'-phosphate + H2O = a ribonucleoside + phosphate. Its function is as follows. Nucleotidase that shows phosphatase activity on nucleoside 5'-monophosphates. The chain is 5'-nucleotidase SurE from Prochlorococcus marinus (strain MIT 9515).